A 72-amino-acid chain; its full sequence is Large ribosomal subunit protein uL29 (72 aa).

Belongs to the universal ribosomal protein uL29 family. Part of the 50S ribosomal subunit.

The chain is Large ribosomal subunit protein uL29 from Pyrococcus furiosus (strain ATCC 43587 / DSM 3638 / JCM 8422 / Vc1).